A 404-amino-acid polypeptide reads, in one-letter code: Acyl-[acyl-carrier-protein] desaturase 7, chloroplastic (404 aa).

Residues 1–39 (MAASATTSTLAVTMFGYPNRNCHLKPPATATLRFWRSAA) constitute a chloroplast transit peptide. Glu138, Glu176, His179, Glu229, Glu262, and His265 together coordinate Fe cation.

This sequence belongs to the fatty acid desaturase type 2 family. In terms of assembly, homodimer. Fe(2+) serves as cofactor.

It is found in the plastid. The protein resides in the chloroplast. It participates in lipid metabolism; fatty acid metabolism. In terms of biological role, introduces a cis double bond in the acyl chain of an acyl-[acyl-carrier protein]. The protein is Acyl-[acyl-carrier-protein] desaturase 7, chloroplastic of Oryza sativa subsp. indica (Rice).